The sequence spans 257 residues: Imidazole glycerol phosphate synthase subunit HisF (257 aa).

Active-site residues include Asp-12 and Asp-131.

This sequence belongs to the HisA/HisF family. In terms of assembly, heterodimer of HisH and HisF.

It localises to the cytoplasm. It catalyses the reaction 5-[(5-phospho-1-deoxy-D-ribulos-1-ylimino)methylamino]-1-(5-phospho-beta-D-ribosyl)imidazole-4-carboxamide + L-glutamine = D-erythro-1-(imidazol-4-yl)glycerol 3-phosphate + 5-amino-1-(5-phospho-beta-D-ribosyl)imidazole-4-carboxamide + L-glutamate + H(+). It functions in the pathway amino-acid biosynthesis; L-histidine biosynthesis; L-histidine from 5-phospho-alpha-D-ribose 1-diphosphate: step 5/9. In terms of biological role, IGPS catalyzes the conversion of PRFAR and glutamine to IGP, AICAR and glutamate. The HisF subunit catalyzes the cyclization activity that produces IGP and AICAR from PRFAR using the ammonia provided by the HisH subunit. This chain is Imidazole glycerol phosphate synthase subunit HisF, found in Burkholderia mallei (strain NCTC 10247).